The following is a 724-amino-acid chain: Ribosomal protein S6 kinase alpha-1 (724 aa).

Phosphoserine is present on S54. A Protein kinase 1 domain is found at F62–Y310. ATP is bound by residues L68–V76 and K94. D187 (proton acceptor) is an active-site residue. Position 221 is a phosphoserine; by PDPK1 (S221). The residue at position 296 (S296) is a Phosphoserine. The AGC-kinase C-terminal domain occupies S311 to G380. T348 is subject to Phosphothreonine. S352, S358, and S369 each carry phosphoserine. Residues Y407–I664 enclose the Protein kinase 2 domain. Residues I413–C421 and K436 each bind ATP. D524 serves as the catalytic Proton acceptor. Position 562 is a phosphothreonine (T562). The residue at position 721 (S721) is a Phosphoserine.

The protein belongs to the protein kinase superfamily. AGC Ser/Thr protein kinase family. S6 kinase subfamily. In terms of assembly, forms a complex with either MAPK1/ERK2 or MAPK3/ERK1 in quiescent cells. Transiently dissociates following mitogenic stimulation. Interacts with ETV1/ER81 and FGFR1. Mg(2+) serves as cofactor. Activated by phosphorylation at Ser-221 by PDPK1. Autophosphorylated on Ser-369, as part of the activation process. May be phosphorylated at Thr-348 and Ser-352 by MAPK1/ERK2 and MAPK3/ERK1. In terms of processing, N-terminal myristoylation results in an activated kinase in the absence of added growth factors. Intestine, thymus, and lung.

It localises to the nucleus. It is found in the cytoplasm. It catalyses the reaction L-seryl-[protein] + ATP = O-phospho-L-seryl-[protein] + ADP + H(+). It carries out the reaction L-threonyl-[protein] + ATP = O-phospho-L-threonyl-[protein] + ADP + H(+). Its activity is regulated as follows. Upon extracellular signal or mitogen stimulation, phosphorylated at Thr-562 in the C-terminal kinase domain (CTKD) by MAPK1/ERK2 and MAPK3/ERK1. The activated CTKD then autophosphorylates Ser-369, allowing binding of PDPK1, which in turn phosphorylates Ser-221 in the N-terminal kinase domain (NTDK) leading to the full activation of the protein and subsequent phosphorylation of the substrates by the NTKD. Its function is as follows. Serine/threonine-protein kinase that acts downstream of ERK (MAPK1/ERK2 and MAPK3/ERK1) signaling and mediates mitogenic and stress-induced activation of the transcription factors CREB1, ETV1/ER81 and NR4A1/NUR77, regulates translation through RPS6 and EIF4B phosphorylation, and mediates cellular proliferation, survival, and differentiation by modulating mTOR signaling and repressing pro-apoptotic function of BAD and DAPK1. In fibroblast, is required for EGF-stimulated phosphorylation of CREB1, which results in the subsequent transcriptional activation of several immediate-early genes. In response to mitogenic stimulation (EGF and PMA), phosphorylates and activates NR4A1/NUR77 and ETV1/ER81 transcription factors and the cofactor CREBBP. Upon insulin-derived signal, acts indirectly on the transcription regulation of several genes by phosphorylating GSK3B at 'Ser-9' and inhibiting its activity. Phosphorylates RPS6 in response to serum or EGF via an mTOR-independent mechanism and promotes translation initiation by facilitating assembly of the pre-initiation complex. In response to insulin, phosphorylates EIF4B, enhancing EIF4B affinity for the EIF3 complex and stimulating cap-dependent translation. Is involved in the mTOR nutrient-sensing pathway by directly phosphorylating TSC2 at 'Ser-1798', which potently inhibits TSC2 ability to suppress mTOR signaling, and mediates phosphorylation of RPTOR, which regulates mTORC1 activity and may promote rapamycin-sensitive signaling independently of the PI3K/AKT pathway. Also involved in feedback regulation of mTORC1 and mTORC2 by phosphorylating DEPTOR. Mediates cell survival by phosphorylating the pro-apoptotic proteins BAD and DAPK1 and suppressing their pro-apoptotic function. Promotes the survival of hepatic stellate cells by phosphorylating CEBPB in response to the hepatotoxin carbon tetrachloride (CCl4). Mediates induction of hepatocyte prolifration by TGFA through phosphorylation of CEBPB. Is involved in cell cycle regulation by phosphorylating the CDK inhibitor CDKN1B, which promotes CDKN1B association with 14-3-3 proteins and prevents its translocation to the nucleus and inhibition of G1 progression. Phosphorylates EPHA2 at 'Ser-897', the RPS6KA-EPHA2 signaling pathway controls cell migration. In response to mTORC1 activation, phosphorylates EIF4B at 'Ser-406' and 'Ser-422' which stimulates bicarbonate cotransporter SLC4A7 mRNA translation, increasing SLC4A7 protein abundance and function. The chain is Ribosomal protein S6 kinase alpha-1 (Rps6ka1) from Mus musculus (Mouse).